Consider the following 162-residue polypeptide: F protein (162 aa).

The tract at residues Met-1–Ser-23 is disordered. Residues Val-14–Ser-23 are compositionally biased toward polar residues.

Its subcellular location is the host cytoplasm. It localises to the host perinuclear region. Functionally, contributes to the RIGI-mediated inhibition of type I interferon production. This is F protein from Homo sapiens (Human).